The sequence spans 444 residues: Enolase (444 aa).

Ser-40 lines the Mg(2+) pocket. The residue at position 40 (Ser-40) is a Phosphoserine. A Pentapeptide insert motif is present at residues 102–106; that stretch reads EWGWS. N6-acetyllysine is present on Lys-131. A Glycyl lysine isopeptide (Lys-Gly) (interchain with G-Cter in ubiquitin) cross-link involves residue Lys-136. Position 137 is a phosphotyrosine (Tyr-137). 2 residues coordinate substrate: His-164 and Glu-173. Catalysis depends on Glu-216, which acts as the Proton donor. Residue Asp-251 coordinates Mg(2+). The DKSLVK motif motif lies at 275–280; it reads DKSLVK. Mg(2+)-binding residues include Glu-302 and Asp-329. The substrate site is built by Glu-302 and Asp-329. Thr-337 bears the Phosphothreonine mark. The active-site Proton acceptor is the Lys-354. Lys-373 is modified (N6-acetyllysine). Substrate is bound by residues 381–384 and Lys-405; that span reads SHRS.

Belongs to the enolase family. Homodimer. Forms a complex at least composed of DegP, ENO and HSP70. Interacts with G-actin. Interacts (via the DKSLVK motif) with mammalian host PLG/plasminogen (present in the mosquito blood meal); the interaction occurs at the ookinete cell surface and is required for ookinete invasion of the mosquito midgut. Interacts with A.gambiae EBP; depending on the Plasmodium species, the interaction is either involved in ookinete invasion of the mosquito midgut (P.berghei) or is dispensable (P.falciparum). The cofactor is Mg(2+).

The protein resides in the cytoplasm. Its subcellular location is the nucleus. The protein localises to the cytoskeleton. It localises to the cell surface. It is found in the cell membrane. The protein resides in the vacuole. The enzyme catalyses (2R)-2-phosphoglycerate = phosphoenolpyruvate + H2O. Its pathway is carbohydrate degradation; glycolysis; pyruvate from D-glyceraldehyde 3-phosphate: step 4/5. Functionally, glycolytic enzyme that catalyzes the conversion of 2-phosphoglycerate to phosphoenolpyruvate. In addition to glycolysis, involved in various processes such as parasite development and invasion. Plays an essential role during ookinete invasion of the mosquito vector midgut by mediating the interaction of the ookinete with the midgut epithelium and, further, by binding to mammalian host plasminogen in the blood meal, whose conversion to active plasmin promotes the invasion process. The protein is Enolase of Plasmodium yoelii yoelii.